The following is a 146-amino-acid chain: Acidic phospholipase A2 C (146 aa).

Residues 1 to 21 (MNPAHLLILAAVCVSPLGASS) form the signal peptide. A propeptide spanning residues 22–27 (NRPMPL) is cleaved from the precursor. Cystine bridges form between Cys38–Cys98, Cys53–Cys145, Cys55–Cys71, Cys70–Cys126, Cys77–Cys119, Cys87–Cys112, and Cys105–Cys117. Ca(2+)-binding residues include Tyr54, Gly56, and Gly58. The active site involves His74. Residue Asp75 coordinates Ca(2+). Residue Asp120 is part of the active site.

It belongs to the phospholipase A2 family. Group I subfamily. D49 sub-subfamily. Requires Ca(2+) as cofactor. In terms of tissue distribution, expressed by the venom gland.

It localises to the secreted. It carries out the reaction a 1,2-diacyl-sn-glycero-3-phosphocholine + H2O = a 1-acyl-sn-glycero-3-phosphocholine + a fatty acid + H(+). Its function is as follows. PLA2 catalyzes the calcium-dependent hydrolysis of the 2-acyl groups in 3-sn-phosphoglycerides. The protein is Acidic phospholipase A2 C of Naja sputatrix (Malayan spitting cobra).